A 230-amino-acid chain; its full sequence is Probable GTP-binding protein EngB (230 aa).

One can recognise an EngB-type G domain in the interval Glu-36–Ile-224. GTP-binding positions include Gly-44–Ser-51, Gly-69–Lys-73, Asp-86–Gly-89, Asn-166–Asp-169, and Val-201–Ala-203. Mg(2+)-binding residues include Ser-51 and Thr-71.

Belongs to the TRAFAC class TrmE-Era-EngA-EngB-Septin-like GTPase superfamily. EngB GTPase family. Mg(2+) serves as cofactor.

Functionally, necessary for normal cell division and for the maintenance of normal septation. The chain is Probable GTP-binding protein EngB from Methanococcus maripaludis (strain DSM 14266 / JCM 13030 / NBRC 101832 / S2 / LL).